The following is a 469-amino-acid chain: A-type ATP synthase subunit B (469 aa).

Belongs to the ATPase alpha/beta chains family. As to quaternary structure, has multiple subunits with at least A(3), B(3), C, D, E, F, H, I and proteolipid K(x).

It localises to the cell membrane. In terms of biological role, component of the A-type ATP synthase that produces ATP from ADP in the presence of a proton gradient across the membrane. The B chain is a regulatory subunit. The polypeptide is A-type ATP synthase subunit B (Staphylothermus marinus (strain ATCC 43588 / DSM 3639 / JCM 9404 / F1)).